The chain runs to 434 residues: AEVCYSHLGCFSDEKPWAGTSQRPIKSLPSDPKKINTRFLLYTNENQNSYQLITATDIATIKASNFNLNRKTRFIIHGFTDSGENSWLSDMCKNMFQVEKVNCICVDWKGGSKAQYSQASQNIRVVGAEVAYLVQVLSTSLNYAPENVHIIGHSLGAHTAGEAGKRLNGLVGRITGLDPAEPYFQDTPEEVRLDPSDAKFVDVIHTDISPILPSLGFGMSQKVGHMDFFPNGGKDMPGCKTGISCNHHRSIEYYHSSILNPEGFLGYPCASYDEFQESGCFPCPAKGCPKMGHFADQYPGKTNAVEQTFFLNTGASDNFTRWRYKVTVTLSGEKDPSGNINVALLGKNGNSAQYQVFKGTLKPDASYTNSIDVELNVGTIQKVTFLWKRSGISVSKPKMGASRITVQSGKDGTKYNFCSSDIVQENVEQTLSPC.

Cys4 and Cys10 are disulfide-bonded. The tract at residues 76–88 (IHGFTDSGENSWL) is required for galactolipase activity. An intrachain disulfide couples Cys92 to Cys103. The active-site Nucleophile is the Ser154. Asp178 serves as the catalytic Charge relay system. Residues Glu189, Arg192, Asp194, and Asp197 each coordinate Ca(2+). A disulfide bridge connects residues Cys239 and Cys245. A required for galactolipase activity region spans residues 240–244 (KTGIS). His247 serves as the catalytic Charge relay system. Disulfide bonds link Cys269-Cys280 and Cys283-Cys288. The N-linked (GlcNAc...) asparagine glycan is linked to Asn318. The PLAT domain occupies 322 to 434 (WRYKVTVTLS…ENVEQTLSPC (113 aa)). Residues Cys418 and Cys434 are joined by a disulfide bond.

This sequence belongs to the AB hydrolase superfamily. Lipase family. Pancreas.

It is found in the secreted. Its subcellular location is the zymogen granule membrane. The protein resides in the cell projection. The protein localises to the neuron projection. It catalyses the reaction a triacylglycerol + H2O = a diacylglycerol + a fatty acid + H(+). The catalysed reaction is a 1,2-diacyl-3-O-(beta-D-galactosyl)-sn-glycerol + 2 H2O = 3-beta-D-galactosyl-sn-glycerol + 2 a fatty acid + 2 H(+). It carries out the reaction 1,2,3-tri-(9Z-octadecenoyl)-glycerol + H2O = di-(9Z)-octadecenoylglycerol + (9Z)-octadecenoate + H(+). The enzyme catalyses di-(9Z)-octadecenoylglycerol + H2O = (9Z-octadecenoyl)-glycerol + (9Z)-octadecenoate + H(+). It catalyses the reaction (9Z-octadecenoyl)-glycerol + H2O = glycerol + (9Z)-octadecenoate + H(+). The catalysed reaction is 1-(9Z-octadecenoyl)-glycerol + H2O = glycerol + (9Z)-octadecenoate + H(+). It carries out the reaction 1,2,3-tripropanoylglycerol + H2O = dipropanoylglycerol + propanoate + H(+). The enzyme catalyses 1,2,3-tributanoylglycerol + H2O = dibutanoylglycerol + butanoate + H(+). It catalyses the reaction 1,2,3-trioctanoylglycerol + H2O = dioctanoylglycerol + octanoate + H(+). The catalysed reaction is 1,2-didecanoylglycerol + H2O = decanoylglycerol + decanoate + H(+). It carries out the reaction long chain 1,2-diacyl-3-O-beta-D-galactosyl-sn-glycerol + H2O = long chain acyl-3-O-beta-D-galactosyl-sn-glycerol + a fatty acid + H(+). The enzyme catalyses 1,2-dioctanoyl-3-O-beta-D-galactosyl-sn-glycerol + H2O = octanoyl-3-(beta-D-galactosyl)-sn-glycerol + octanoate + H(+). It catalyses the reaction 1,2-didodecanoyl-3-beta-D-galactosyl-sn-glycerol + H2O = dodecanoyl-3-beta-D-galactosyl-sn-glycerol + dodecanoate + H(+). The catalysed reaction is 1-beta-D-galactosyl-2,3-didodecanoyl-sn-glycerol + H2O = 1-beta-D-galactosyl-dodecanoyl-sn-glycerol + dodecanoate + H(+). It carries out the reaction a 1,2-diacyl-3-O-[alpha-D-galactosyl-(1-&gt;6)-beta-D-galactosyl]-sn-glycerol + H2O = acyl-3-O-[alpha-D-galactosyl-(1-&gt;6)-beta-D-galactosyl]-sn-glycerol + a fatty acid + H(+). The enzyme catalyses long chain 1,2-diacyl-3-O-[alpha-D-galactosyl-(1-&gt;6)-beta-D-galactosyl]-sn-glycerol + H2O = long chain acyl-3-O-[alpha-D-galactosyl-(1-&gt;6)-beta-D-galactosyl]-sn-glycerol + a fatty acid + H(+). It catalyses the reaction 1,2-dioctanoyl-3-O-[alpha-D-galactosyl-(1-&gt;6)-beta-D-galactosyl]-sn-glycerol + H2O = octanoyl-3-O-[alpha-D-galactosyl-(1-&gt;6)-beta-D-galactosyl]-sn-glycerol + octanoate + H(+). The catalysed reaction is 1,2-didodecanoyl-3-O-[alpha-D-galactosyl-(1-&gt;6)-beta-D-galactosyl]-sn-glycerol + H2O = dodecanoyl-3-O-[alpha-D-galactosyl-(1-&gt;6)-beta-D-galactosyl]-sn-glycerol + dodecanoate + H(+). It carries out the reaction a 1,2-diacyl-sn-glycero-3-phosphocholine + H2O = a monoacyl-sn-glycero-3-phosphocholine + a fatty acid + H(+). It participates in glycerolipid metabolism; triacylglycerol degradation. It functions in the pathway glycolipid metabolism. CLPS stimulates triacylglycerol lipase activity. Not inhibited by bile salts. In terms of biological role, lipase that primarily hydrolyzes triglycerides and galactosylglycerides. In neonates, may play a major role in pancreatic digestion of dietary fats such as milk fat globules enriched in long-chain triglycerides. Hydrolyzes short-, medium- and long-chain fatty acyls in triglycerides without apparent positional specificity. Can completely deacylate triacylglycerols. When the liver matures and bile salt synthesis increases, likely functions mainly as a galactolipase and monoacylglycerol lipase. Hydrolyzes monogalactosyldiglycerols (MGDG) and digalactosyldiacylglycerols (DGDG) present in a plant-based diet, releasing long-chain polyunsaturated fatty acids. Hydrolyzes medium- and long-chain fatty acyls in galactolipids. May act together with LIPF to hydrolyze partially digested triglycerides. Hydrolyzes long-chain monoglycerides with high efficiency. In cytotoxic T cells, contributes to perforin-dependent cell lysis, but is unlikely to mediate direct cytotoxicity. Also has low phospholipase activity. In neurons, required for the localization of the phospholipid 1-oleoyl-2-palmitoyl-PC (OPPC) to neurite tips through acyl chain remodeling of membrane phospholipids. The resulting OPPC-rich lipid membrane domain recruits the t-SNARE protein STX4 by selectively interacting with the STX4 transmembrane domain and this promotes surface expression of the dopamine transporter SLC6A3/DAT at neurite tips by facilitating fusion of SLC6A3-containing transport vesicles with the plasma membrane. The protein is Pancreatic lipase-related protein 2 of Cavia porcellus (Guinea pig).